The chain runs to 440 residues: Chorismate synthase 1, chloroplastic (440 aa).

A chloroplast-targeting transit peptide spans 1–54; the sequence is MASFVPTKQFVGASSSSDIGSSRLVSLQLPSKFSSSNFHLPSRPSQLKRLEIQA. Positions 100 to 147 are disordered; the sequence is RRRPGQSRITTPRKETDTCKISSGTADGLTTGSPIKVEVPNTDQRGND. Residues 118 to 132 are compositionally biased toward polar residues; it reads CKISSGTADGLTTGS.

Belongs to the chorismate synthase family. As to quaternary structure, homotetramer. The cofactor is FMNH2. As to expression, predominantly expressed in flowers and roots and, to a lesser extent, in stems, leaves, and cotyledons.

The protein localises to the plastid. It localises to the chloroplast. It carries out the reaction 5-O-(1-carboxyvinyl)-3-phosphoshikimate = chorismate + phosphate. It functions in the pathway metabolic intermediate biosynthesis; chorismate biosynthesis; chorismate from D-erythrose 4-phosphate and phosphoenolpyruvate: step 7/7. Its function is as follows. Catalyzes the last common step of the biosynthesis of aromatic amino acids, produced via the shikimic acid pathway. This Solanum lycopersicum (Tomato) protein is Chorismate synthase 1, chloroplastic (CS1).